A 131-amino-acid chain; its full sequence is UPF0102 protein CYA_0708 (131 aa).

This sequence belongs to the UPF0102 family.

The chain is UPF0102 protein CYA_0708 from Synechococcus sp. (strain JA-3-3Ab) (Cyanobacteria bacterium Yellowstone A-Prime).